A 357-amino-acid chain; its full sequence is UDP-N-acetylglucosamine--N-acetylmuramyl-(pentapeptide) pyrophosphoryl-undecaprenol N-acetylglucosamine transferase (357 aa).

UDP-N-acetyl-alpha-D-glucosamine is bound by residues 15-17 (TGG), Asn124, Arg165, Ser194, and Gln288.

Belongs to the glycosyltransferase 28 family. MurG subfamily.

It localises to the cell inner membrane. It carries out the reaction di-trans,octa-cis-undecaprenyl diphospho-N-acetyl-alpha-D-muramoyl-L-alanyl-D-glutamyl-meso-2,6-diaminopimeloyl-D-alanyl-D-alanine + UDP-N-acetyl-alpha-D-glucosamine = di-trans,octa-cis-undecaprenyl diphospho-[N-acetyl-alpha-D-glucosaminyl-(1-&gt;4)]-N-acetyl-alpha-D-muramoyl-L-alanyl-D-glutamyl-meso-2,6-diaminopimeloyl-D-alanyl-D-alanine + UDP + H(+). It participates in cell wall biogenesis; peptidoglycan biosynthesis. Its function is as follows. Cell wall formation. Catalyzes the transfer of a GlcNAc subunit on undecaprenyl-pyrophosphoryl-MurNAc-pentapeptide (lipid intermediate I) to form undecaprenyl-pyrophosphoryl-MurNAc-(pentapeptide)GlcNAc (lipid intermediate II). This chain is UDP-N-acetylglucosamine--N-acetylmuramyl-(pentapeptide) pyrophosphoryl-undecaprenol N-acetylglucosamine transferase, found in Nostoc punctiforme (strain ATCC 29133 / PCC 73102).